We begin with the raw amino-acid sequence, 302 residues long: Nucleotide-binding protein BceJ2315_08000 (302 aa).

Gly-8–Ser-15 provides a ligand contact to ATP. Position 57 to 60 (Asp-57 to Ser-60) interacts with GTP.

The protein belongs to the RapZ-like family.

Functionally, displays ATPase and GTPase activities. This chain is Nucleotide-binding protein BceJ2315_08000, found in Burkholderia cenocepacia (strain ATCC BAA-245 / DSM 16553 / LMG 16656 / NCTC 13227 / J2315 / CF5610) (Burkholderia cepacia (strain J2315)).